Consider the following 502-residue polypeptide: Cytochrome P450 71B16 (502 aa).

Residues Met-1–Lys-21 form a helical membrane-spanning segment. Cys-444 is a binding site for heme.

It belongs to the cytochrome P450 family. The cofactor is heme.

It is found in the membrane. This Arabidopsis thaliana (Mouse-ear cress) protein is Cytochrome P450 71B16 (CYP71B16).